We begin with the raw amino-acid sequence, 252 residues long: Probable transcriptional regulatory protein DSY2470 (252 aa).

It belongs to the TACO1 family.

The protein resides in the cytoplasm. The sequence is that of Probable transcriptional regulatory protein DSY2470 from Desulfitobacterium hafniense (strain Y51).